We begin with the raw amino-acid sequence, 468 residues long: Argininosuccinate lyase (468 aa).

It belongs to the lyase 1 family. Argininosuccinate lyase subfamily.

It localises to the cytoplasm. The enzyme catalyses 2-(N(omega)-L-arginino)succinate = fumarate + L-arginine. It functions in the pathway amino-acid biosynthesis; L-arginine biosynthesis; L-arginine from L-ornithine and carbamoyl phosphate: step 3/3. This Gloeobacter violaceus (strain ATCC 29082 / PCC 7421) protein is Argininosuccinate lyase.